Here is a 78-residue protein sequence, read N- to C-terminus: Large ribosomal subunit protein bL28 (78 aa).

Residues 1 to 23 (MSRVCQVSGKRVQTGNNVSHANN) form a disordered region. Positions 11 to 22 (RVQTGNNVSHAN) are enriched in polar residues.

This sequence belongs to the bacterial ribosomal protein bL28 family.

This chain is Large ribosomal subunit protein bL28, found in Xanthomonas campestris pv. campestris (strain 8004).